The following is a 395-amino-acid chain: Chorismate synthase (395 aa).

2 residues coordinate NADP(+): Arg-40 and Arg-46. FMN is bound by residues 135 to 137 (RAS) and 256 to 257 (QA). A compositionally biased stretch (basic and acidic residues) spans 272–283 (RRGSQAHDEMRP). The tract at residues 272 to 296 (RRGSQAHDEMRPGPDGILRSTNRAG) is disordered. Residues Gly-300, 315-319 (KPIST), and Arg-341 each bind FMN.

This sequence belongs to the chorismate synthase family. In terms of assembly, homotetramer. FMNH2 is required as a cofactor.

It carries out the reaction 5-O-(1-carboxyvinyl)-3-phosphoshikimate = chorismate + phosphate. The protein operates within metabolic intermediate biosynthesis; chorismate biosynthesis; chorismate from D-erythrose 4-phosphate and phosphoenolpyruvate: step 7/7. In terms of biological role, catalyzes the anti-1,4-elimination of the C-3 phosphate and the C-6 proR hydrogen from 5-enolpyruvylshikimate-3-phosphate (EPSP) to yield chorismate, which is the branch point compound that serves as the starting substrate for the three terminal pathways of aromatic amino acid biosynthesis. This reaction introduces a second double bond into the aromatic ring system. In Rhodococcus opacus (strain B4), this protein is Chorismate synthase.